The chain runs to 128 residues: Glycoprotein hormone alpha-2 (128 aa).

An N-terminal signal peptide occupies residues 1–20 (MPMAPRVLLLCLLGLAVTEG). 4 disulfide bridges follow: cysteine 30-cysteine 88, cysteine 47-cysteine 102, cysteine 56-cysteine 118, and cysteine 60-cysteine 120. Residues asparagine 36 and asparagine 80 are each glycosylated (N-linked (GlcNAc...) asparagine).

It belongs to the glycoprotein hormones subunit alpha family. In terms of assembly, heterodimer with GPHB5; this heterodimer interacts with thyroid-stimulating hormone receptor (TSHR), and hence stimulates cAMP production.

The protein localises to the secreted. Functions as a heterodimeric glycoprotein hormone with GPHB5 able to bind and activate the thyroid-stimulating hormone receptor (TSHR), leading to increased cAMP production. Plays a central role in controlling thyroid cell metabolism. The chain is Glycoprotein hormone alpha-2 (Gpha2) from Mus musculus (Mouse).